The chain runs to 503 residues: Adenosine deaminase 2-A (503 aa).

A signal peptide spans 1–24; it reads MHVLFLGDLMWIYLLLLCCASCNG. 2 residues coordinate Zn(2+): His-105 and His-107. Asp-108 serves as a coordination point for substrate. Asn-120 carries N-linked (GlcNAc...) asparagine glycosylation. A disulfide bridge links Cys-130 with Cys-152. 2 N-linked (GlcNAc...) asparagine glycosylation sites follow: Asn-167 and Asn-178. Substrate is bound by residues 197–204 and His-286; that span reads WERFEQVF. Asn-290 carries N-linked (GlcNAc...) asparagine glycosylation. Residue Gly-319 participates in substrate binding. His-349 contributes to the Zn(2+) binding site. The active-site Proton donor is Glu-352. Asn-371 carries an N-linked (GlcNAc...) asparagine glycan. His-377 functions as the Proton acceptor in the catalytic mechanism. Asp-434 is a Zn(2+) binding site. Asp-435 lines the substrate pocket.

Belongs to the metallo-dependent hydrolases superfamily. Adenosine and AMP deaminases family. ADGF subfamily. Requires Zn(2+) as cofactor.

The protein resides in the secreted. The catalysed reaction is adenosine + H2O + H(+) = inosine + NH4(+). Functionally, adenosine deaminase that may contribute to the degradation of extracellular adenosine, a signaling molecule that controls a variety of cellular responses. May play a role in the regulation of cell proliferation. The chain is Adenosine deaminase 2-A from Danio rerio (Zebrafish).